The chain runs to 153 residues: Small ribosomal subunit protein uS19 (153 aa).

Belongs to the universal ribosomal protein uS19 family.

This is Small ribosomal subunit protein uS19 (RPS15) from Elaeis oleifera (American oil palm).